A 555-amino-acid polypeptide reads, in one-letter code: Glutamine--tRNA ligase (555 aa).

Residues 34–44 carry the 'HIGH' region motif; the sequence is PEPNGYLHIGH. ATP contacts are provided by residues 35-37 and 41-47; these read EPN and HIGHAKS. L-glutamine is bound by residues D67 and Y212. ATP contacts are provided by residues T231, 261–262, and 269–271; these read RL and MSK. Positions 268–272 match the 'KMSKS' region motif; that stretch reads IMSKR.

Belongs to the class-I aminoacyl-tRNA synthetase family. In terms of assembly, monomer.

The protein localises to the cytoplasm. It carries out the reaction tRNA(Gln) + L-glutamine + ATP = L-glutaminyl-tRNA(Gln) + AMP + diphosphate. The polypeptide is Glutamine--tRNA ligase (Yersinia enterocolitica serotype O:8 / biotype 1B (strain NCTC 13174 / 8081)).